Consider the following 217-residue polypeptide: Uracil-DNA glycosylase (217 aa).

Aspartate 62 serves as the catalytic Proton acceptor.

The protein belongs to the uracil-DNA glycosylase (UDG) superfamily. UNG family.

It localises to the cytoplasm. The enzyme catalyses Hydrolyzes single-stranded DNA or mismatched double-stranded DNA and polynucleotides, releasing free uracil.. Its function is as follows. Excises uracil residues from the DNA which can arise as a result of misincorporation of dUMP residues by DNA polymerase or due to deamination of cytosine. This is Uracil-DNA glycosylase from Streptococcus pneumoniae (strain JJA).